A 256-amino-acid chain; its full sequence is Type III pantothenate kinase (256 aa).

6-13 contributes to the ATP binding site; the sequence is DVGNSNIV. Substrate is bound by residues Y100 and 107–110; that span reads GADR. Residue D109 is the Proton acceptor of the active site. D129 contributes to the K(+) binding site. T132 is a binding site for ATP. Position 184 (T184) interacts with substrate.

This sequence belongs to the type III pantothenate kinase family. As to quaternary structure, homodimer. NH4(+) is required as a cofactor. The cofactor is K(+).

The protein localises to the cytoplasm. The catalysed reaction is (R)-pantothenate + ATP = (R)-4'-phosphopantothenate + ADP + H(+). Its pathway is cofactor biosynthesis; coenzyme A biosynthesis; CoA from (R)-pantothenate: step 1/5. Functionally, catalyzes the phosphorylation of pantothenate (Pan), the first step in CoA biosynthesis. The chain is Type III pantothenate kinase from Geotalea uraniireducens (strain Rf4) (Geobacter uraniireducens).